The sequence spans 436 residues: mRNA cap guanine-N(7) methyltransferase (436 aa).

A disordered region spans residues 1–50 (MSTKPEKPIWMSQEDYDRQYGSITGDESSTVSKKDSKVTANAPGDGNGSL). The region spanning 141–424 (SPIIKLRNFN…FYTMFAFRKV (284 aa)) is the mRNA cap 0 methyltransferase domain. Residue 150–151 (NN) participates in mRNA binding. Positions 154, 172, 194, 223, 249, and 254 each coordinate S-adenosyl-L-methionine.

This sequence belongs to the class I-like SAM-binding methyltransferase superfamily. mRNA cap 0 methyltransferase family.

It localises to the nucleus. It catalyses the reaction a 5'-end (5'-triphosphoguanosine)-ribonucleoside in mRNA + S-adenosyl-L-methionine = a 5'-end (N(7)-methyl 5'-triphosphoguanosine)-ribonucleoside in mRNA + S-adenosyl-L-homocysteine. Its function is as follows. Responsible for methylating the 5'-cap structure of mRNAs. The sequence is that of mRNA cap guanine-N(7) methyltransferase (ABD1) from Saccharomyces cerevisiae (strain ATCC 204508 / S288c) (Baker's yeast).